A 475-amino-acid polypeptide reads, in one-letter code: 3-isopropylmalate dehydratase large subunit (475 aa).

Residues Cys352, Cys413, and Cys416 each contribute to the [4Fe-4S] cluster site.

The protein belongs to the aconitase/IPM isomerase family. LeuC type 1 subfamily. Heterodimer of LeuC and LeuD. Requires [4Fe-4S] cluster as cofactor.

It catalyses the reaction (2R,3S)-3-isopropylmalate = (2S)-2-isopropylmalate. It functions in the pathway amino-acid biosynthesis; L-leucine biosynthesis; L-leucine from 3-methyl-2-oxobutanoate: step 2/4. In terms of biological role, catalyzes the isomerization between 2-isopropylmalate and 3-isopropylmalate, via the formation of 2-isopropylmaleate. This chain is 3-isopropylmalate dehydratase large subunit, found in Pseudomonas syringae pv. tomato (strain ATCC BAA-871 / DC3000).